We begin with the raw amino-acid sequence, 87 residues long: Colicin-E7 immunity protein (87 aa).

Belongs to the colicins ColE2/ColE8/ColE9 and pyocins S1/S2 family.

Functionally, this protein is able to protect a cell, which harbors the plasmid ColE7 encoding colicin E7, against colicin E7, it binds specifically to the DNase-type colicin and inhibits its bactericidal activity. Dimeric ImmE7 may possess a RNase activity that cleaves its own mRNA at a specific site and thus autoregulates translational expression of the downstream ceiE7 gene as well as degradation of the upstream ceaE7 mRNA. The sequence is that of Colicin-E7 immunity protein (imm) from Escherichia coli.